We begin with the raw amino-acid sequence, 811 residues long: Exocyst complex component 6B (811 aa).

A coiled-coil region spans residues 50–119 (MEKLETRIRN…LVIAMEELKQ (70 aa)). The segment at 260–280 (STSPKSEQDSGILDVEDEEDD) is disordered.

This sequence belongs to the SEC15 family. The exocyst complex is composed of SEC3, SEC5, SEC6, SEC8, SEC10, SEC15, EXO70 and EXO84.

In terms of biological role, component of the exocyst complex involved in the docking of exocytic vesicles with fusion sites on the plasma membrane. The protein is Exocyst complex component 6B (EXOC6B) of Homo sapiens (Human).